Reading from the N-terminus, the 250-residue chain is Hydroxyacylglutathione hydrolase (250 aa).

Positions 53, 55, 57, 58, 110, 127, and 165 each coordinate Zn(2+).

The protein belongs to the metallo-beta-lactamase superfamily. Glyoxalase II family. As to quaternary structure, monomer. The cofactor is Zn(2+).

It catalyses the reaction an S-(2-hydroxyacyl)glutathione + H2O = a 2-hydroxy carboxylate + glutathione + H(+). The protein operates within secondary metabolite metabolism; methylglyoxal degradation; (R)-lactate from methylglyoxal: step 2/2. In terms of biological role, thiolesterase that catalyzes the hydrolysis of S-D-lactoyl-glutathione to form glutathione and D-lactic acid. The protein is Hydroxyacylglutathione hydrolase of Buchnera aphidicola subsp. Schizaphis graminum (strain Sg).